The sequence spans 213 residues: Orotate phosphoribosyltransferase (213 aa).

Position 26 (Lys26) interacts with 5-phospho-alpha-D-ribose 1-diphosphate. Position 34–35 (Phe34–Phe35) interacts with orotate. 5-phospho-alpha-D-ribose 1-diphosphate contacts are provided by residues Tyr72 to Lys73, Arg99, Lys100, Lys103, His105, and Asp124 to Ala132. Residues Thr128 and Arg156 each coordinate orotate.

Belongs to the purine/pyrimidine phosphoribosyltransferase family. PyrE subfamily. As to quaternary structure, homodimer. Mg(2+) serves as cofactor.

The catalysed reaction is orotidine 5'-phosphate + diphosphate = orotate + 5-phospho-alpha-D-ribose 1-diphosphate. Its pathway is pyrimidine metabolism; UMP biosynthesis via de novo pathway; UMP from orotate: step 1/2. In terms of biological role, catalyzes the transfer of a ribosyl phosphate group from 5-phosphoribose 1-diphosphate to orotate, leading to the formation of orotidine monophosphate (OMP). This is Orotate phosphoribosyltransferase from Escherichia coli O127:H6 (strain E2348/69 / EPEC).